We begin with the raw amino-acid sequence, 723 residues long: Pescadillo homolog (723 aa).

The region spanning 380 to 497 (EAGSLFATFT…KLLRPDLYAP (118 aa)) is the BRCT domain. 2 disordered regions span residues 440–471 (RPQLPQASLPPLPKNPEDGTEAAPRPGTRVPG) and 501–723 (LPPH…LNKK). Positions 522–551 (LADQEEEGEAERAAEAEEYENDEQEESGEE) form a coiled coil. Acidic residues-rich tracts occupy residues 537 to 550 (AEEYENDEQEESGE), 588 to 600 (MAEDTDESSDDGD), and 608 to 622 (FDQDEDMSSESEDEE). Basic and acidic residues-rich tracts occupy residues 623–634 (EKARSQHQKELE), 670–681 (KKKEEEELERQK), and 700–709 (KKQDAEAEKL). Positions 656 to 723 (KKQQAPLAKK…RKIEQGLNKK (68 aa)) form a coiled coil. The segment covering 710–723 (RQKRRKIEQGLNKK) has biased composition (basic residues).

It belongs to the pescadillo family. As to quaternary structure, component of the NOP7 complex, composed of ERB1, NOP7 and YTM1. The complex is held together by ERB1, which interacts with NOP7 via its N-terminal domain and with YTM1 via a high-affinity interaction between the seven-bladed beta-propeller domains of the 2 proteins. The NOP7 complex associates with the 66S pre-ribosome.

The protein localises to the nucleus. It localises to the nucleolus. It is found in the nucleoplasm. In terms of biological role, component of the NOP7 complex, which is required for maturation of the 25S and 5.8S ribosomal RNAs and formation of the 60S ribosome. This Ajellomyces capsulatus (strain NAm1 / WU24) (Darling's disease fungus) protein is Pescadillo homolog.